A 141-amino-acid chain; its full sequence is Large ribosomal subunit protein uL13 (141 aa).

Belongs to the universal ribosomal protein uL13 family. As to quaternary structure, part of the 50S ribosomal subunit.

Functionally, this protein is one of the early assembly proteins of the 50S ribosomal subunit, although it is not seen to bind rRNA by itself. It is important during the early stages of 50S assembly. The chain is Large ribosomal subunit protein uL13 from Helicobacter pylori (strain Shi470).